A 512-amino-acid polypeptide reads, in one-letter code: Putative aldehyde-dehydrogenase-like protein y4uC (512 aa).

The interval 14-41 (MKPERGRRSPLPRRPTRPPDERSSGIGN) is disordered. Residue 266 to 271 (GGFATG) coordinates NADP(+). Catalysis depends on residues glutamate 286 and cysteine 320.

The protein belongs to the aldehyde dehydrogenase family.

It participates in amino-acid degradation; 4-aminobutanoate degradation. Its function is as follows. Could be a succinate-semialdehyde dehydrogenase (NADP(+)). In Sinorhizobium fredii (strain NBRC 101917 / NGR234), this protein is Putative aldehyde-dehydrogenase-like protein y4uC.